The chain runs to 254 residues: tRNA (guanine-N(1)-)-methyltransferase (254 aa).

S-adenosyl-L-methionine contacts are provided by residues Gly113 and Leu133 to Leu138.

This sequence belongs to the RNA methyltransferase TrmD family. In terms of assembly, homodimer.

It localises to the cytoplasm. The enzyme catalyses guanosine(37) in tRNA + S-adenosyl-L-methionine = N(1)-methylguanosine(37) in tRNA + S-adenosyl-L-homocysteine + H(+). Its function is as follows. Specifically methylates guanosine-37 in various tRNAs. The polypeptide is tRNA (guanine-N(1)-)-methyltransferase (Herpetosiphon aurantiacus (strain ATCC 23779 / DSM 785 / 114-95)).